The following is an 843-amino-acid chain: Molybdenum cofactor sulfurase (843 aa).

K241 bears the N6-(pyridoxal phosphate)lysine mark. The active site involves C405. In terms of domain architecture, MOSC spans 657-836 (QYLRKFVMPG…LMVGDIVIPS (180 aa)).

The protein belongs to the class-V pyridoxal-phosphate-dependent aminotransferase family. MOCOS subfamily. Requires pyridoxal 5'-phosphate as cofactor.

The catalysed reaction is Mo-molybdopterin + L-cysteine + AH2 = thio-Mo-molybdopterin + L-alanine + A + H2O. Its function is as follows. Sulfurates the molybdenum cofactor. Sulfation of molybdenum is essential for xanthine dehydrogenase (XDH) and aldehyde oxidase (ADO) enzymes in which molybdenum cofactor is liganded by 1 oxygen and 1 sulfur atom in active form. In Aspergillus fumigatus (strain CBS 144.89 / FGSC A1163 / CEA10) (Neosartorya fumigata), this protein is Molybdenum cofactor sulfurase.